Consider the following 62-residue polypeptide: Metallothionein-4 (62 aa).

A divalent metal cation contacts are provided by Cys-6, Cys-8, Cys-14, Cys-16, Cys-20, Cys-22, Cys-25, Cys-27, Cys-34, Cys-35, Cys-37, Cys-38, Cys-42, Cys-45, Cys-49, Cys-51, Cys-58, Cys-60, and Cys-61.

The protein belongs to the metallothionein superfamily. Type 1 family.

Functionally, seems to bind zinc and copper. Could play a special role in regulating zinc metabolism during the differentiation of stratified epithelia. The sequence is that of Metallothionein-4 (MT4) from Homo sapiens (Human).